The sequence spans 304 residues: Foldase protein PrsA (304 aa).

Residues 1-19 (MKKKLLSVAAVASVFTLAA) form the signal peptide. A lipid anchor (N-palmitoyl cysteine) is attached at Cys20. A lipid anchor (S-diacylglycerol cysteine) is attached at Cys20. Residues 140–231 (KVEVKASHIL…FGYHIIKVTD (92 aa)) form the PpiC domain. The tract at residues 285–304 (FDLDKQEQQQMQQQMQQQQQ) is disordered. Positions 292 to 304 (QQQMQQQMQQQQQ) are enriched in low complexity.

The protein belongs to the PrsA family.

Its subcellular location is the cell membrane. It catalyses the reaction [protein]-peptidylproline (omega=180) = [protein]-peptidylproline (omega=0). Plays a major role in protein secretion by helping the post-translocational extracellular folding of several secreted proteins. The polypeptide is Foldase protein PrsA (Exiguobacterium sibiricum (strain DSM 17290 / CCUG 55495 / CIP 109462 / JCM 13490 / 255-15)).